The following is a 416-amino-acid chain: NADH-quinone oxidoreductase subunit H (416 aa).

9 helical membrane passes run 16-36 (LILA…LAAI), 84-104 (PVYL…FAVI), 124-144 (LAVA…GIVL), 165-185 (VVSY…YAGT), 197-217 (STWY…SMVG), 260-280 (VSAL…PISL), 288-308 (WWPL…YIWL), 320-340 (FMAI…MIVA), and 353-373 (WASG…VILW).

It belongs to the complex I subunit 1 family. In terms of assembly, NDH-1 is composed of 14 different subunits. Subunits NuoA, H, J, K, L, M, N constitute the membrane sector of the complex.

The protein resides in the cell membrane. The catalysed reaction is a quinone + NADH + 5 H(+)(in) = a quinol + NAD(+) + 4 H(+)(out). NDH-1 shuttles electrons from NADH, via FMN and iron-sulfur (Fe-S) centers, to quinones in the respiratory chain. The immediate electron acceptor for the enzyme in this species is believed to be menaquinone. Couples the redox reaction to proton translocation (for every two electrons transferred, four hydrogen ions are translocated across the cytoplasmic membrane), and thus conserves the redox energy in a proton gradient. This subunit may bind ubiquinone. This is NADH-quinone oxidoreductase subunit H from Mycobacterium sp. (strain KMS).